Here is a 683-residue protein sequence, read N- to C-terminus: Methionine--tRNA ligase (683 aa).

The 'HIGH' region signature appears at 15–25; sequence PYANGPIHLGH. Zn(2+) contacts are provided by C146, C149, C159, and C162. The 'KMSKS' region motif lies at 332–336; that stretch reads KMSKS. Residue K335 participates in ATP binding. The region spanning 581–683 is the tRNA-binding domain; the sequence is DFCKVDLRVA…AGAKAGQRVK (103 aa).

It belongs to the class-I aminoacyl-tRNA synthetase family. MetG type 1 subfamily. Homodimer. Requires Zn(2+) as cofactor.

It localises to the cytoplasm. It carries out the reaction tRNA(Met) + L-methionine + ATP = L-methionyl-tRNA(Met) + AMP + diphosphate. Functionally, is required not only for elongation of protein synthesis but also for the initiation of all mRNA translation through initiator tRNA(fMet) aminoacylation. This Histophilus somni (strain 2336) (Haemophilus somnus) protein is Methionine--tRNA ligase.